A 407-amino-acid chain; its full sequence is Probable tRNA sulfurtransferase (407 aa).

A THUMP domain is found at 61-165 (NEIIQRLSKV…MDAIYIYEKV (105 aa)). ATP-binding positions include 183-184 (ML), 208-209 (HF), Arg-265, Gly-287, and Gln-296.

This sequence belongs to the ThiI family.

The protein resides in the cytoplasm. The enzyme catalyses [ThiI sulfur-carrier protein]-S-sulfanyl-L-cysteine + a uridine in tRNA + 2 reduced [2Fe-2S]-[ferredoxin] + ATP + H(+) = [ThiI sulfur-carrier protein]-L-cysteine + a 4-thiouridine in tRNA + 2 oxidized [2Fe-2S]-[ferredoxin] + AMP + diphosphate. It catalyses the reaction [ThiS sulfur-carrier protein]-C-terminal Gly-Gly-AMP + S-sulfanyl-L-cysteinyl-[cysteine desulfurase] + AH2 = [ThiS sulfur-carrier protein]-C-terminal-Gly-aminoethanethioate + L-cysteinyl-[cysteine desulfurase] + A + AMP + 2 H(+). Its pathway is cofactor biosynthesis; thiamine diphosphate biosynthesis. In terms of biological role, catalyzes the ATP-dependent transfer of a sulfur to tRNA to produce 4-thiouridine in position 8 of tRNAs, which functions as a near-UV photosensor. Also catalyzes the transfer of sulfur to the sulfur carrier protein ThiS, forming ThiS-thiocarboxylate. This is a step in the synthesis of thiazole, in the thiamine biosynthesis pathway. The sulfur is donated as persulfide by IscS. This is Probable tRNA sulfurtransferase from Staphylococcus epidermidis (strain ATCC 35984 / DSM 28319 / BCRC 17069 / CCUG 31568 / BM 3577 / RP62A).